The sequence spans 59 residues: Large ribosomal subunit protein bL32 (59 aa).

Belongs to the bacterial ribosomal protein bL32 family.

This Mycoplasma capricolum subsp. capricolum (strain California kid / ATCC 27343 / NCTC 10154) protein is Large ribosomal subunit protein bL32.